Reading from the N-terminus, the 425-residue chain is Serine--tRNA ligase (425 aa).

Residue 233-235 (TAE) coordinates L-serine. 264–266 (RAE) provides a ligand contact to ATP. Glu-287 contributes to the L-serine binding site. 351–354 (EISS) contributes to the ATP binding site. Ser-387 contributes to the L-serine binding site.

This sequence belongs to the class-II aminoacyl-tRNA synthetase family. Type-1 seryl-tRNA synthetase subfamily. As to quaternary structure, homodimer. The tRNA molecule binds across the dimer.

It is found in the cytoplasm. It carries out the reaction tRNA(Ser) + L-serine + ATP = L-seryl-tRNA(Ser) + AMP + diphosphate + H(+). The catalysed reaction is tRNA(Sec) + L-serine + ATP = L-seryl-tRNA(Sec) + AMP + diphosphate + H(+). Its pathway is aminoacyl-tRNA biosynthesis; selenocysteinyl-tRNA(Sec) biosynthesis; L-seryl-tRNA(Sec) from L-serine and tRNA(Sec): step 1/1. Functionally, catalyzes the attachment of serine to tRNA(Ser). Is also able to aminoacylate tRNA(Sec) with serine, to form the misacylated tRNA L-seryl-tRNA(Sec), which will be further converted into selenocysteinyl-tRNA(Sec). In Clostridium perfringens (strain 13 / Type A), this protein is Serine--tRNA ligase.